The sequence spans 469 residues: 3-isopropylmalate dehydratase large subunit (469 aa).

Positions 349, 410, and 413 each coordinate [4Fe-4S] cluster.

This sequence belongs to the aconitase/IPM isomerase family. LeuC type 1 subfamily. Heterodimer of LeuC and LeuD. [4Fe-4S] cluster is required as a cofactor.

It carries out the reaction (2R,3S)-3-isopropylmalate = (2S)-2-isopropylmalate. Its pathway is amino-acid biosynthesis; L-leucine biosynthesis; L-leucine from 3-methyl-2-oxobutanoate: step 2/4. Its function is as follows. Catalyzes the isomerization between 2-isopropylmalate and 3-isopropylmalate, via the formation of 2-isopropylmaleate. The sequence is that of 3-isopropylmalate dehydratase large subunit from Neisseria gonorrhoeae (strain NCCP11945).